Here is a 619-residue protein sequence, read N- to C-terminus: Cationic amino acid transporter 3 (619 aa).

The Cytoplasmic segment spans residues 1 to 36 (MPWQAFRRFGQKLVRRRTLESGMAETRLARCLSTLD). Residues 37–57 (LVALGVGSTLGAGVYVLAGEV) form a helical membrane-spanning segment. Over 58–61 (AKDK) the chain is Extracellular. A helical transmembrane segment spans residues 62–82 (AGPSIVICFLVAALSSVLAGL). Residues 83–107 (CYAEFGARVPRSGSAYLYSYVTVGE) are Cytoplasmic-facing. Residues 108-128 (LWAFTTGWNLILSYVIGTASV) form a helical membrane-spanning segment. The Extracellular portion of the chain corresponds to 129–162 (ARAWSSAFDNLIGNHISKTLQGSIALHVPHVLAE). The chain crosses the membrane as a helical span at residues 163–183 (YPDFFALGLVLLLTGLLALGA). Topologically, residues 184–191 (SESALVTK) are cytoplasmic. The helical transmembrane segment at 192-212 (VFTGVNLLVLGFVMISGFVKG) threads the bilayer. Over 213-233 (DVHNWKLTEEDYELAMAELND) the chain is Extracellular. The N-linked (GlcNAc...) asparagine glycan is linked to asparagine 232. A helical transmembrane segment spans residues 234-254 (TYSLGPLGSGGFVPFGFEGIL). Over 255-285 (RGAATCFYAFVGFDCIATTGEEAQNPQRSIP) the chain is Cytoplasmic. Residues 286–306 (MGIVISLSVCFLAYFAVSSAL) form a helical membrane-spanning segment. The Extracellular segment spans residues 307 to 335 (TLMMPYYQLQPESPLPEAFLYIGWAPARY). The chain crosses the membrane as a helical span at residues 336–356 (VVAVGSLCALSTSLLGSMFPM). The Cytoplasmic segment spans residues 357-382 (PRVIYAMAEDGLLFRVLARIHTGTRT). A helical membrane pass occupies residues 383 to 403 (PIIATVVSGIIAAFMAFLFKL). Topologically, residues 404 to 406 (TDL) are extracellular. A helical membrane pass occupies residues 407–427 (VDLMSIGTLLAYSLVSICVLI). Over 428-475 (LRYQPDQETKTGEEVELQEEAITTESEKLTLWGLFFPLNSIPTPLSGQ) the chain is Cytoplasmic. Residues 476–496 (IVYVCSSLLAVLLTALCLVLA) form a helical membrane-spanning segment. At 497–506 (QWSVPLLSGD) the chain is on the extracellular side. Residues 507–527 (LLWTAVVVLLLLLIIGIIVVI) traverse the membrane as a helical segment. The Cytoplasmic portion of the chain corresponds to 528-540 (WRQPQSSTPLHFK). The chain crosses the membrane as a helical span at residues 541–561 (VPALPLLPLMSIFVNIYLMMQ). Topologically, residues 562–569 (MTAGTWAR) are extracellular. The chain crosses the membrane as a helical span at residues 570 to 590 (FGVWMLIGFAIYFGYGIQHSL). Residues 591–619 (EEIKSNQPSRKSRAKTVDLDPGTLYVHSV) are Cytoplasmic-facing. Threonine 606 carries the post-translational modification Phosphothreonine. At serine 618 the chain carries Phosphoserine.

This sequence belongs to the amino acid-polyamine-organocation (APC) superfamily. Cationic amino acid transporter (CAT) (TC 2.A.3.3) family. Post-translationally, N-glycosylated. As to expression, highly expressed in thymus, uterus and testis. Detected at lower levels in brain, mammary gland, prostate, salivary gland and fetal spleen. In brain, highest expression in thalamus, hippocampus and amygdala.

The protein localises to the cell membrane. The enzyme catalyses L-arginine(in) = L-arginine(out). It catalyses the reaction L-lysine(in) = L-lysine(out). It carries out the reaction L-ornithine(in) = L-ornithine(out). In terms of biological role, uniporter that mediates the uptake of cationic L-amino acids such as L-arginine, L-lysine and L-ornithine. The transport is sodium ions- and pH-independent, moderately trans-stimulated and is mediated by passive diffusion. In Homo sapiens (Human), this protein is Cationic amino acid transporter 3.